The primary structure comprises 124 residues: Fluoride-specific ion channel FluC (124 aa).

4 helical membrane-spanning segments follow: residues 1-21 (MVPL…LRFA), 38-58 (TLAV…LFLI), 69-89 (GLMV…LDTV), and 99-119 (LALG…WAGL). Na(+) contacts are provided by G76 and T79.

It belongs to the fluoride channel Fluc/FEX (TC 1.A.43) family.

It localises to the cell inner membrane. It catalyses the reaction fluoride(in) = fluoride(out). With respect to regulation, na(+) is not transported, but it plays an essential structural role and its presence is essential for fluoride channel function. In terms of biological role, fluoride-specific ion channel. Important for reducing fluoride concentration in the cell, thus reducing its toxicity. The protein is Fluoride-specific ion channel FluC of Pseudomonas fluorescens (strain Pf0-1).